We begin with the raw amino-acid sequence, 509 residues long: Dol-P-Glc:Glc(2)Man(9)GlcNAc(2)-PP-Dol alpha-1,2-glucosyltransferase (509 aa).

At 1–4 (MGKL) the chain is on the cytoplasmic side. Residues 5–25 (AVAAITSLWVIPMSIIVNHIV) form a helical membrane-spanning segment. Over 26 to 57 (PEPYMDEIFHVPQAQQYCNGNFRSWDPMITTP) the chain is Lumenal. A helical membrane pass occupies residues 58 to 78 (PGLYYLSLAHVASLFPGMLLM). Over 79–99 (ENTSQSFSEACSTSVLRSTNA) the chain is Cytoplasmic. The chain crosses the membrane as a helical span at residues 100–120 (VSAVLCGVLVYEIIRFLGPNL). The Lumenal portion of the chain corresponds to 121–124 (SDRK). A helical transmembrane segment spans residues 125 to 145 (ATFMALVMSLYPLHWFFTFLY). The Cytoplasmic segment spans residues 146-170 (YTDVASLTAVLAMYLTCLKRRYVLS). The chain crosses the membrane as a helical span at residues 171–191 (ALFGTLAVFIRQTNVVWMLFV). The Lumenal portion of the chain corresponds to 192-285 (ACSGILDFTL…KWRILIKFSP (94 aa)). The interval 210–254 (QEVNQELHQSSNKKGATLRSNLRKRKSDISSDTSDPFNHGQTVPS) is disordered. 2 stretches are compositionally biased toward polar residues: residues 215–229 (ELHQ…TLRS) and 239–254 (SSDT…TVPS). A helical membrane pass occupies residues 286–306 (FIFVVVAFGIFILWNGGIVLG). Over 307-311 (AKEAH) the chain is Cytoplasmic. Residues 312 to 332 (VVSLHFAQIMYFSLVSALFTA) traverse the membrane as a helical segment. Residues 333–355 (PLHFSVNQLRHQFHQLHRNWSLS) lie on the Lumenal side of the membrane. A glycan (N-linked (GlcNAc...) asparagine) is linked at Asn-351. Residues 356 to 376 (LILTLVALVAGFVSVHFFSLA) traverse the membrane as a helical segment. Over 377 to 400 (HPYLLADNRHYPFYLWRKIINAHW) the chain is Cytoplasmic. A helical membrane pass occupies residues 401–421 (LMKYILVPVYVYSWFSILTLL). Topologically, residues 422–428 (AKTRRQT) are lumenal. A helical membrane pass occupies residues 429–449 (WILVYFLATCGVLVPTPLIEF). Topologically, residues 450-472 (RYYTIPFYLFMLHSCVRSSSFAT) are cytoplasmic. A helical membrane pass occupies residues 473 to 493 (WLLIGTIFVSINVFTMAMFLF). Residues 494–509 (RPFKWSHEDGVQRFIW) lie on the Lumenal side of the membrane.

It belongs to the ALG10 glucosyltransferase family.

The protein localises to the endoplasmic reticulum membrane. The catalysed reaction is an alpha-D-Glc-(1-&gt;3)-alpha-D-Glc-(1-&gt;3)-alpha-D-Man-(1-&gt;2)-alpha-D-Man-(1-&gt;2)-alpha-D-Man-(1-&gt;3)-[alpha-D-Man-(1-&gt;2)-alpha-D-Man-(1-&gt;3)-[alpha-D-Man-(1-&gt;2)-alpha-D-Man-(1-&gt;6)]-alpha-D-Man-(1-&gt;6)]-beta-D-Man-(1-&gt;4)-beta-D-GlcNAc-(1-&gt;4)-alpha-D-GlcNAc-diphospho-di-trans,poly-cis-dolichol + a di-trans,poly-cis-dolichyl beta-D-glucosyl phosphate = a alpha-D-Glc-(1-&gt;2)-alpha-D-Glc-(1-&gt;3)-alpha-D-Glc-(1-&gt;3)-alpha-D-Man-(1-&gt;2)-alpha-D-Man-(1-&gt;2)-alpha-D-Man-(1-&gt;3)-[alpha-D-Man-(1-&gt;2)-alpha-D-Man-(1-&gt;3)-[alpha-D-Man-(1-&gt;2)-alpha-D-Man-(1-&gt;6)]-alpha-D-Man-(1-&gt;6)]-beta-D-Man-(1-&gt;4)-beta-D-GlcNAc-(1-&gt;4)-alpha-D-GlcNAc-diphospho-di-trans,poly-cis-dolichol + a di-trans,poly-cis-dolichyl phosphate + H(+). Its pathway is protein modification; protein glycosylation. Functionally, dol-P-Glc:Glc(2)Man(9)GlcNAc(2)-PP-Dol alpha-1,2-glucosyltransferase that operates in the biosynthetic pathway of dolichol-linked oligosaccharides, the glycan precursors employed in protein asparagine (N)-glycosylation. The assembly of dolichol-linked oligosaccharides begins on the cytosolic side of the endoplasmic reticulum membrane and finishes in its lumen. The sequential addition of sugars to dolichol pyrophosphate produces dolichol-linked oligosaccharides containing fourteen sugars, including two GlcNAcs, nine mannoses and three glucoses. Once assembled, the oligosaccharide is transferred from the lipid to nascent proteins by oligosaccharyltransferases. In the lumen of the endoplasmic reticulum, adds the third and last glucose residue from dolichyl phosphate glucose (Dol-P-Glc) onto the lipid-linked oligosaccharide intermediate Glc(2)Man(9)GlcNAc(2)-PP-Dol to produce Glc(3)Man(9)GlcNAc(2)-PP-Dol. The polypeptide is Dol-P-Glc:Glc(2)Man(9)GlcNAc(2)-PP-Dol alpha-1,2-glucosyltransferase (Arabidopsis thaliana (Mouse-ear cress)).